An 89-amino-acid chain; its full sequence is Large ribosomal subunit protein bL27 (89 aa).

The interval 1-21 (MAHKKAGGSSRNGRDSQSKRL) is disordered.

This sequence belongs to the bacterial ribosomal protein bL27 family.

The polypeptide is Large ribosomal subunit protein bL27 (Rhizobium rhizogenes (strain K84 / ATCC BAA-868) (Agrobacterium radiobacter)).